A 533-amino-acid chain; its full sequence is D-3-phosphoglycerate dehydrogenase (533 aa).

N-acetylalanine is present on A2. Position 14 is a phosphoserine (S14). K21 bears the N6-acetyllysine; alternate mark. A Glycyl lysine isopeptide (Lys-Gly) (interchain with G-Cter in SUMO1); alternate cross-link involves residue K21. K21 is covalently cross-linked (Glycyl lysine isopeptide (Lys-Gly) (interchain with G-Cter in SUMO2); alternate). N6-acetyllysine is present on K58. Residues T78, 155–156, D175, T207, 234–236, and D260 each bind NAD(+); these read RI and CAR. T78 carries the post-translational modification Phosphothreonine. R236 is an active-site residue. E265 is a catalytic residue. Catalysis depends on H283, which acts as the Proton donor. 283–286 provides a ligand contact to NAD(+); it reads HLGA.

This sequence belongs to the D-isomer specific 2-hydroxyacid dehydrogenase family. Homotetramer. Liver, kidney, brain, testis.

It catalyses the reaction (2R)-3-phosphoglycerate + NAD(+) = 3-phosphooxypyruvate + NADH + H(+). It participates in amino-acid biosynthesis; L-serine biosynthesis; L-serine from 3-phospho-D-glycerate: step 1/3. In terms of biological role, catalyzes the reversible oxidation of 3-phospho-D-glycerate to 3-phosphonooxypyruvate, the first step of the phosphorylated L-serine biosynthesis pathway. Does not catalyze the reversible oxidation of 2-hydroxyglutarate to 2-oxoglutarate and the reversible oxidation of (S)-malate to oxaloacetate. In Rattus norvegicus (Rat), this protein is D-3-phosphoglycerate dehydrogenase (Phgdh).